The chain runs to 192 residues: Pyridoxal 5'-phosphate synthase subunit PdxT (192 aa).

50-52 (GES) is a binding site for L-glutamine. Catalysis depends on Cys82, which acts as the Nucleophile. L-glutamine is bound by residues Arg109 and 136–137 (IR). Residues His172 and Glu174 each act as charge relay system in the active site.

The protein belongs to the glutaminase PdxT/SNO family. In the presence of PdxS, forms a dodecamer of heterodimers. Only shows activity in the heterodimer.

It catalyses the reaction aldehydo-D-ribose 5-phosphate + D-glyceraldehyde 3-phosphate + L-glutamine = pyridoxal 5'-phosphate + L-glutamate + phosphate + 3 H2O + H(+). It carries out the reaction L-glutamine + H2O = L-glutamate + NH4(+). It functions in the pathway cofactor biosynthesis; pyridoxal 5'-phosphate biosynthesis. Functionally, catalyzes the hydrolysis of glutamine to glutamate and ammonia as part of the biosynthesis of pyridoxal 5'-phosphate. The resulting ammonia molecule is channeled to the active site of PdxS. This is Pyridoxal 5'-phosphate synthase subunit PdxT from Haemophilus influenzae (strain PittEE).